The chain runs to 403 residues: uncharacterized protein (403 aa).

Zn(2+) is bound at residue H81. D83 is a catalytic residue. Zn(2+) is bound at residue D114. E148 (proton acceptor) is an active-site residue. The Zn(2+) site is built by E149, E174, and H374.

The protein belongs to the peptidase M20A family. Zn(2+) is required as a cofactor. It depends on Co(2+) as a cofactor.

This is an uncharacterized protein from Escherichia coli O157:H7.